A 264-amino-acid polypeptide reads, in one-letter code: tRNA pseudouridine synthase A (264 aa).

Aspartate 51 acts as the Nucleophile in catalysis. Tyrosine 109 contacts substrate.

It belongs to the tRNA pseudouridine synthase TruA family. In terms of assembly, homodimer.

It catalyses the reaction uridine(38/39/40) in tRNA = pseudouridine(38/39/40) in tRNA. Formation of pseudouridine at positions 38, 39 and 40 in the anticodon stem and loop of transfer RNAs. This chain is tRNA pseudouridine synthase A, found in Pasteurella multocida (strain Pm70).